The sequence spans 400 residues: Nicotinate phosphoribosyltransferase (400 aa).

His220 is subject to Phosphohistidine; by autocatalysis.

It belongs to the NAPRTase family. Transiently phosphorylated on a His residue during the reaction cycle. Phosphorylation strongly increases the affinity for substrates and increases the rate of nicotinate D-ribonucleotide production. Dephosphorylation regenerates the low-affinity form of the enzyme, leading to product release.

The catalysed reaction is nicotinate + 5-phospho-alpha-D-ribose 1-diphosphate + ATP + H2O = nicotinate beta-D-ribonucleotide + ADP + phosphate + diphosphate. It functions in the pathway cofactor biosynthesis; NAD(+) biosynthesis; nicotinate D-ribonucleotide from nicotinate: step 1/1. Its function is as follows. Catalyzes the synthesis of beta-nicotinate D-ribonucleotide from nicotinate and 5-phospho-D-ribose 1-phosphate at the expense of ATP. The sequence is that of Nicotinate phosphoribosyltransferase from Escherichia fergusonii (strain ATCC 35469 / DSM 13698 / CCUG 18766 / IAM 14443 / JCM 21226 / LMG 7866 / NBRC 102419 / NCTC 12128 / CDC 0568-73).